The primary structure comprises 372 residues: MTTAKINLLDFDRKGLRAFFSEELGEKAFRADQVMKWMYHFGCDDFDQMNNINKKLREKLKHKCEIRAPYVSEAQHSSDGTIKWAMKVGDQDVETVYIPDGDRATLCVSSQVGCALECKFCSTAQQGFNRNLKVSEIVGQIWRAAREIGLEKETGRRPITNVVMMGMGEPLLNMKNLIPALEIMLDDLGFALSKRRVTVSTSGVVSGLDQMTGKIDVALAISLHAPTDELRSQIMPINDRWDIDAFLASVRRYIASSNANRGRVTVEYVLLDHVNDDMDHARQLAELLKDTPAKINLIPFNPYPGSPYKKPSNSRIDRFMKTLMEYDYTVTIRKTRGDDIDAACGQLVGDVIDRTKRTKVKQQGEAIPVKTV.

Catalysis depends on Glu94, which acts as the Proton acceptor. One can recognise a Radical SAM core domain in the interval Asp100–Asp339. Cys107 and Cys344 are joined by a disulfide. Residues Cys114, Cys118, and Cys121 each coordinate [4Fe-4S] cluster. S-adenosyl-L-methionine is bound by residues Gly168 to Glu169, Ser200, Ser222 to His224, and Asn301. Cys344 functions as the S-methylcysteine intermediate in the catalytic mechanism.

This sequence belongs to the radical SAM superfamily. RlmN family. [4Fe-4S] cluster serves as cofactor.

The protein localises to the cytoplasm. It carries out the reaction adenosine(2503) in 23S rRNA + 2 reduced [2Fe-2S]-[ferredoxin] + 2 S-adenosyl-L-methionine = 2-methyladenosine(2503) in 23S rRNA + 5'-deoxyadenosine + L-methionine + 2 oxidized [2Fe-2S]-[ferredoxin] + S-adenosyl-L-homocysteine. It catalyses the reaction adenosine(37) in tRNA + 2 reduced [2Fe-2S]-[ferredoxin] + 2 S-adenosyl-L-methionine = 2-methyladenosine(37) in tRNA + 5'-deoxyadenosine + L-methionine + 2 oxidized [2Fe-2S]-[ferredoxin] + S-adenosyl-L-homocysteine. In terms of biological role, specifically methylates position 2 of adenine 2503 in 23S rRNA and position 2 of adenine 37 in tRNAs. m2A2503 modification seems to play a crucial role in the proofreading step occurring at the peptidyl transferase center and thus would serve to optimize ribosomal fidelity. In Aliivibrio fischeri (strain ATCC 700601 / ES114) (Vibrio fischeri), this protein is Dual-specificity RNA methyltransferase RlmN.